A 234-amino-acid polypeptide reads, in one-letter code: ATP synthase subunit a 1 (234 aa).

6 helical membrane-spanning segments follow: residues 29 to 49, 90 to 110, 116 to 136, 147 to 167, 186 to 206, and 207 to 227; these read FLVH…VALL, LIAT…IPGF, NLNT…VVGV, FVGP…IGHL, IVLV…MMLM, and GILV…IYIA.

Belongs to the ATPase A chain family. F-type ATPases have 2 components, CF(1) - the catalytic core - and CF(0) - the membrane proton channel. CF(1) has five subunits: alpha(3), beta(3), gamma(1), delta(1), epsilon(1). CF(0) has three main subunits: a(1), b(2) and c(9-12). The alpha and beta chains form an alternating ring which encloses part of the gamma chain. CF(1) is attached to CF(0) by a central stalk formed by the gamma and epsilon chains, while a peripheral stalk is formed by the delta and b chains.

It localises to the cell inner membrane. In terms of biological role, key component of the proton channel; it plays a direct role in the translocation of protons across the membrane. This chain is ATP synthase subunit a 1, found in Syntrophotalea carbinolica (strain DSM 2380 / NBRC 103641 / GraBd1) (Pelobacter carbinolicus).